Reading from the N-terminus, the 78-residue chain is Acyl carrier protein (78 aa).

Positions 1 to 76 constitute a Carrier domain; it reads MSLEDDVKLI…DVITYIKTRQ (76 aa). At Ser36 the chain carries O-(pantetheine 4'-phosphoryl)serine.

The protein belongs to the acyl carrier protein (ACP) family. 4'-phosphopantetheine is transferred from CoA to a specific serine of apo-ACP by AcpS. This modification is essential for activity because fatty acids are bound in thioester linkage to the sulfhydryl of the prosthetic group.

It is found in the cytoplasm. It functions in the pathway lipid metabolism; fatty acid biosynthesis. Functionally, carrier of the growing fatty acid chain in fatty acid biosynthesis. This is Acyl carrier protein from Chlamydia felis (strain Fe/C-56) (Chlamydophila felis).